We begin with the raw amino-acid sequence, 172 residues long: Single-stranded DNA-binding protein A (172 aa).

An SSB domain is found at 1–104 (MLNRVVLVGR…VQAESVQFLE (104 aa)). Phosphotyrosine is present on Tyr82. The interval 103 to 172 (LEPKNGGGSG…IDISDDDLPF (70 aa)) is disordered. The span at 107-131 (NGGGSGSGGYNEGNSGGGQYFGGGQ) shows a compositional bias: gly residues. Over residues 132-149 (NDNPFGGNQNNQRRNQGN) the composition is skewed to low complexity. Residues 167–172 (DDDLPF) carry the Important for interaction with partner proteins motif.

In terms of assembly, homotetramer. Interacts with proteins involved in DNA metabolism such as PriA, RecQ, RecG, RecS, DnaE, RarA, RecJ, RecO, SbcC, RecD2 (formerly YrrC), XseA and Ung. Interacts with RecQ via its 10 C-terminal residues. Interacts with RecD2. In terms of processing, phosphorylated by YwqD, which increases ssDNA affinity; dephosphorylated by YwqE.

The protein localises to the cytoplasm. It is found in the nucleoid. Plays an important role in DNA replication, recombination and repair. Binds to single-stranded (ss)DNA and to an array of partner proteins to recruit them to their sites of action during DNA metabolism. Associates with oriC, this requires DnaA. SsbA binding to ssDNA prevents DnaB and DnaD individually from binding to DNA. Has a 20-fold higher affinity for ssDNA than SsbB; SsbA and DprA activate the homologous DNA strand exchange function of RecA-ATP. Enhances the activity of 3'-5' DNA helicase RecQ. The polypeptide is Single-stranded DNA-binding protein A (ssbA) (Bacillus subtilis (strain 168)).